Reading from the N-terminus, the 115-residue chain is MSSSVPYDPYVPPEESNSGANPNSQNKTAALRQEIDDTVGIMRDNINKVAERGERLTSIEDKADNLAISAQGFKRGANRVRKQMWWKDLKMRMCLFLVVIILLVVIIVPIVVHFS.

Residues 1-16 are compositionally biased toward low complexity; that stretch reads MSSSVPYDPYVPPEES. The disordered stretch occupies residues 1-28; it reads MSSSVPYDPYVPPEESNSGANPNSQNKT. Over 1 to 93 the chain is Cytoplasmic; it reads MSSSVPYDPY…MWWKDLKMRM (93 aa). A compositionally biased stretch (polar residues) spans 17–28; that stretch reads NSGANPNSQNKT. One can recognise a v-SNARE coiled-coil homology domain in the interval 27–87; the sequence is KTAALRQEID…NRVRKQMWWK (61 aa). Ser58 bears the Phosphoserine mark. Lys62 participates in a covalent cross-link: Glycyl lysine isopeptide (Lys-Gly) (interchain with G-Cter in ubiquitin). Residue Cys94 is the site of S-palmitoyl cysteine attachment. The chain crosses the membrane as a helical; Anchor for type IV membrane protein span at residues 94–112; it reads CLFLVVIILLVVIIVPIVV. The Vesicular segment spans residues 113–115; that stretch reads HFS.

Belongs to the synaptobrevin family. Palmitoylated by SWF1.

The protein resides in the endomembrane system. Its function is as follows. SNC1 and SNC2 are vesicle-targeting proteins essential for normal secretory traffic between the Golgi and the plasma membrane. They may also be involved in vesicle fusion. This Saccharomyces cerevisiae (strain ATCC 204508 / S288c) (Baker's yeast) protein is Synaptobrevin homolog 2 (SNC2).